The following is a 165-amino-acid chain: Peptide methionine sulfoxide reductase MsrA (165 aa).

Cysteine 10 is an active-site residue.

It belongs to the MsrA Met sulfoxide reductase family.

It catalyses the reaction L-methionyl-[protein] + [thioredoxin]-disulfide + H2O = L-methionyl-(S)-S-oxide-[protein] + [thioredoxin]-dithiol. The catalysed reaction is [thioredoxin]-disulfide + L-methionine + H2O = L-methionine (S)-S-oxide + [thioredoxin]-dithiol. In terms of biological role, has an important function as a repair enzyme for proteins that have been inactivated by oxidation. Catalyzes the reversible oxidation-reduction of methionine sulfoxide in proteins to methionine. The chain is Peptide methionine sulfoxide reductase MsrA from Campylobacter jejuni subsp. jejuni serotype O:6 (strain 81116 / NCTC 11828).